A 496-amino-acid polypeptide reads, in one-letter code: L-arabinose isomerase (496 aa).

Residues Glu-302, Glu-329, His-346, and His-445 each contribute to the Mn(2+) site.

Belongs to the arabinose isomerase family. Mn(2+) serves as cofactor.

The enzyme catalyses beta-L-arabinopyranose = L-ribulose. It participates in carbohydrate degradation; L-arabinose degradation via L-ribulose; D-xylulose 5-phosphate from L-arabinose (bacterial route): step 1/3. Its function is as follows. Catalyzes the conversion of L-arabinose to L-ribulose. The protein is L-arabinose isomerase of Thermotoga sp. (strain RQ2).